We begin with the raw amino-acid sequence, 88 residues long: Beta-insect excitatory toxin 2 (88 aa).

An N-terminal signal peptide occupies residues Met1–Gly18. One can recognise an LCN-type CS-alpha/beta domain in the interval Lys20–Asp83. 4 disulfide bridges follow: Cys34/Cys55, Cys40/Cys60, Cys44/Cys62, and Cys56/Cys82.

Belongs to the long (4 C-C) scorpion toxin superfamily. Sodium channel inhibitor family. Beta subfamily. In terms of tissue distribution, expressed by the venom gland.

It is found in the secreted. Its function is as follows. Excitatory insect beta-toxins induce a spastic paralysis. They bind voltage-independently at site-4 of sodium channels (Nav) and shift the voltage of activation toward more negative potentials thereby affecting sodium channel activation and promoting spontaneous and repetitive firing. This toxin is active only on insects. The chain is Beta-insect excitatory toxin 2 from Androctonus australis (Sahara scorpion).